The following is a 258-amino-acid chain: Global transcriptional regulator CodY (258 aa).

The interval Met1–Leu156 is GAF domain. Residues Ala204–Arg223 constitute a DNA-binding region (H-T-H motif).

Belongs to the CodY family.

It localises to the cytoplasm. DNA-binding global transcriptional regulator which is involved in the adaptive response to starvation and acts by directly or indirectly controlling the expression of numerous genes in response to nutrient availability. During rapid exponential growth, CodY is highly active and represses genes whose products allow adaptation to nutrient depletion. This Clostridium acetobutylicum (strain ATCC 824 / DSM 792 / JCM 1419 / IAM 19013 / LMG 5710 / NBRC 13948 / NRRL B-527 / VKM B-1787 / 2291 / W) protein is Global transcriptional regulator CodY.